The following is a 29-amino-acid chain: Small toxic protein ZorO (29 aa).

A helical transmembrane segment spans residues 10–27 (VLIAVLELLVALLRLIDL).

Its subcellular location is the cell inner membrane. Its function is as follows. Toxic component of a type I toxin-antitoxin (TA) system. Expression in the absence of its cognate antitoxin (small sRNA orzO) leads to cell stasis and a decrease in colony-forming units. Repression of ZorO toxicity requires base pairing between zorO mRNA and sRNA OrzO, as well as RNase III (rnc), suggesting the mRNA is degraded. Base pairing occurs between 18 bases in the 5' UTR of zorO mRNA and the 5' end of OrzO sRNA. sRNA OrzP, which differs only in 4 of these 18 bases, does not repress ZorO toxicity. Integration of the protein into the inner membrane damages membrane integrity and affects membrane potential. It leads to increased levels of hydroxyl radicals. The sequence is that of Small toxic protein ZorO from Escherichia coli O157:H7.